Reading from the N-terminus, the 146-residue chain is Hemoglobin subunit beta (146 aa).

The 145-residue stretch at 2–146 (HWTAEEKSAI…VAHALAHQYH (145 aa)) folds into the Globin domain. Heme b is bound by residues His63 and His92.

The protein belongs to the globin family. In terms of assembly, heterotetramer of two alpha chains and two beta chains. Oxygenation results in dissociation to dimers. As to expression, red blood cells.

Functionally, involved in oxygen transport from the lung to the various peripheral tissues. This chain is Hemoglobin subunit beta (HBB), found in Erythrolamprus miliaris (South American water snake).